Here is a 387-residue protein sequence, read N- to C-terminus: 3-hydroxy-D-aspartate aldolase (387 aa).

Position 62 is an N6-(pyridoxal phosphate)lysine (Lys-62). Pyridoxal 5'-phosphate is bound by residues Gln-85, Thr-238, 256 to 257, and Tyr-265; that span reads GS. His-355 and Asp-357 together coordinate Mg(2+).

Belongs to the DSD1 family. Homodimer. It depends on pyridoxal 5'-phosphate as a cofactor. The cofactor is Mg(2+).

The catalysed reaction is (3S)-3-hydroxy-D-aspartate = glyoxylate + glycine. It catalyses the reaction (3R)-3-hydroxy-D-aspartate = glyoxylate + glycine. Functionally, catalyzes the condensation of glyoxylate and glycine into (2R,3S)-beta-hydroxyaspartate ((3S)-3-hydroxy-D-aspartate). Is essential for the growth of P.denitrificans in the presence of glycolate and glyoxylate since it functions in glyoxylate assimilation via the beta-hydroxyaspartate cycle (BHAC). Is also able to catalyze the reverse reaction in vitro, i.e. the cleavage of (3S)-3-hydroxy-D-aspartate, and that of D-threonine to a lesser extent. The sequence is that of 3-hydroxy-D-aspartate aldolase from Paracoccus denitrificans (strain Pd 1222).